Reading from the N-terminus, the 244-residue chain is 5-oxoprolinase subunit A (244 aa).

It belongs to the LamB/PxpA family. Forms a complex composed of PxpA, PxpB and PxpC.

The catalysed reaction is 5-oxo-L-proline + ATP + 2 H2O = L-glutamate + ADP + phosphate + H(+). Its function is as follows. Catalyzes the cleavage of 5-oxoproline to form L-glutamate coupled to the hydrolysis of ATP to ADP and inorganic phosphate. This chain is 5-oxoprolinase subunit A, found in Shigella sonnei (strain Ss046).